A 427-amino-acid polypeptide reads, in one-letter code: Endothelin-1 receptor (427 aa).

Positions 1–20 (METFWLRLSFWVALVGGVIS) are cleaved as a signal peptide. Residues 21-80 (DNPESYSTNLSIHVDSVATFHGTELSFVVTTHQPTNLALPSNGSMHNYCPQQTKITSAFK) are Extracellular-facing. Residues N29 and N62 are each glycosylated (N-linked (GlcNAc...) asparagine). A helical membrane pass occupies residues 81 to 102 (YINTVISCTIFIVGMVGNATLL). Over 103–112 (RIIYQNKCMR) the chain is Cytoplasmic. A helical membrane pass occupies residues 113–132 (NGPNALIASLALGDLIYVVI). Residues 133-159 (DLPINVFKLLAGRWPFEQNDFGVFLCK) lie on the Extracellular side of the membrane. An intrachain disulfide couples C158 to C239. A helical transmembrane segment spans residues 160-181 (LFPFLQKSSVGITVLNLCALSV). Over 182–205 (DRYRAVASWSRVQGIGIPLVTAIE) the chain is Cytoplasmic. A helical transmembrane segment spans residues 206–229 (IVSIWILSFILAIPEAIGFVMVPF). At 230–256 (EYKGAQHRTCMLNATSKFMEFYQDVKD) the chain is on the extracellular side. The chain crosses the membrane as a helical span at residues 257 to 278 (WWLFGFYFCMPLVCTAIFYTLM). Residues 279–306 (TCEMLNRRNGSLRIALSEHLKQRREVAK) lie on the Cytoplasmic side of the membrane. The helical transmembrane segment at 307 to 328 (TVFCLVVIFALCWFPLHLSRIL) threads the bilayer. The Extracellular portion of the chain corresponds to 329–347 (KKTVYDEMDTNRCELLSFL). The helical transmembrane segment at 348 to 372 (LLMDYIGINLATMNSCINPIALYFV) threads the bilayer. Topologically, residues 373–427 (SKKFKNCFQSCLCCCCYQSKSLMTSVPMNGTSIQWKNHEQNNHNTERSSHKDSIN) are cytoplasmic. S425 carries the phosphoserine modification.

It belongs to the G-protein coupled receptor 1 family. Endothelin receptor subfamily. EDNRA sub-subfamily. In terms of assembly, interacts with HDAC7 and KAT5.

The protein localises to the cell membrane. In terms of biological role, receptor for endothelin-1. Mediates its action by association with G proteins that activate a phosphatidylinositol-calcium second messenger system. The rank order of binding affinities for ET-A is: ET1 &gt; ET2 &gt;&gt; ET3. The sequence is that of Endothelin-1 receptor from Bos taurus (Bovine).